A 144-amino-acid polypeptide reads, in one-letter code: Large ribosomal subunit protein uL16 (144 aa).

Residues 1–16 (MLIPKRVKYRKQHRGR) show a composition bias toward basic residues. The disordered stretch occupies residues 1–23 (MLIPKRVKYRKQHRGRPGGGMAK).

Belongs to the universal ribosomal protein uL16 family. In terms of assembly, part of the 50S ribosomal subunit.

Its function is as follows. Binds 23S rRNA and is also seen to make contacts with the A and possibly P site tRNAs. This chain is Large ribosomal subunit protein uL16, found in Pelotomaculum thermopropionicum (strain DSM 13744 / JCM 10971 / SI).